The following is a 441-amino-acid chain: EP1-like glycoprotein 3 (441 aa).

The N-terminal stretch at 1 to 22 is a signal peptide; it reads MKFSITLALCFTLSIFLIGSQA. The region spanning 29–159 is the Bulb-type lectin domain; that stretch reads QFRVVNEGGY…SGKFVWQSFD (131 aa). 3 N-linked (GlcNAc...) asparagine glycosylation sites follow: asparagine 102, asparagine 258, and asparagine 269. The WD repeat unit spans residues 254-296; that stretch reads GSKFNVSTFLSRPKHNATLSFIRLESDGNIRVWSYSTLATSTA. Positions 356-433 constitute a PAN domain; sequence CDPKTFHYFK…SSLVAYVKAP (78 aa). Cystine bridges form between cysteine 387–cysteine 409 and cysteine 391–cysteine 397.

Phosphorylated on tyrosine.

Its subcellular location is the secreted. The protein resides in the cell wall. Its function is as follows. May be involved in a cell-to cell programmed cell death (PCD) signaling mechanism. This chain is EP1-like glycoprotein 3, found in Arabidopsis thaliana (Mouse-ear cress).